The chain runs to 1162 residues: Cartilage intermediate layer protein 2 (1162 aa).

Residues Met-1–Ala-20 form the signal peptide. A disordered region spans residues Ala-23–Glu-51. The 52-residue stretch at Glu-146–Pro-197 folds into the TSP type-1 domain. Disulfide bonds link Cys-158–Cys-191, Cys-162–Cys-196, Cys-173–Cys-181, and Cys-314–Cys-360. One can recognise an Ig-like C2-type domain in the interval Pro-293–Thr-377. A glycan (N-linked (GlcNAc...) asparagine) is linked at Asn-330.

May be cleaved into 2 chains possibly by a furin-like protease upon or preceding secretion. Post-translationally, N-glycosylated. As to expression, expressed in articulated and meniscal cartilage (at protein level). Also detected in heart, skeletal muscle and brain. Not detected in growth plate cartilage.

It is found in the secreted. The protein localises to the extracellular space. Its subcellular location is the extracellular matrix. May play a role in cartilage scaffolding. This Mus musculus (Mouse) protein is Cartilage intermediate layer protein 2.